Consider the following 127-residue polypeptide: Nuclear transport factor 2 (127 aa).

The NTF2 domain occupies 11-124 (VGKQFVEHYY…FLLINDFFRL (114 aa)).

It localises to the cytoplasm. The protein resides in the cytosol. It is found in the nucleus outer membrane. Its subcellular location is the nucleus. The protein localises to the nuclear pore complex. It localises to the nucleus inner membrane. The protein resides in the nucleoplasm. Functionally, mediates the import of GDP-bound RAN from the cytoplasm into the nucleus which is essential for the function of RAN in cargo receptor-mediated nucleocytoplasmic transport. Thereby, plays indirectly a more general role in cargo receptor-mediated nucleocytoplasmic transport. Interacts with GDP-bound RAN in the cytosol, recruits it to the nuclear pore complex via its interaction with nucleoporins and promotes its nuclear import. The polypeptide is Nuclear transport factor 2 (Dictyostelium discoideum (Social amoeba)).